Here is a 258-residue protein sequence, read N- to C-terminus: NAD kinase (258 aa).

The active-site Proton acceptor is Asp-51. NAD(+) contacts are provided by residues 51-52, Lys-56, 119-120, Lys-130, Asp-149, 160-165, and Ala-184; these read DG, ND, and TAYSLS.

Belongs to the NAD kinase family. A divalent metal cation serves as cofactor.

The protein localises to the cytoplasm. The catalysed reaction is NAD(+) + ATP = ADP + NADP(+) + H(+). Its function is as follows. Involved in the regulation of the intracellular balance of NAD and NADP, and is a key enzyme in the biosynthesis of NADP. Catalyzes specifically the phosphorylation on 2'-hydroxyl of the adenosine moiety of NAD to yield NADP. The sequence is that of NAD kinase from Thermotoga petrophila (strain ATCC BAA-488 / DSM 13995 / JCM 10881 / RKU-1).